The sequence spans 380 residues: Erythronate-4-phosphate dehydrogenase (380 aa).

Serine 45 and threonine 66 together coordinate substrate. Residues aspartate 146, threonine 174, 205 to 207, and aspartate 231 each bind NAD(+); that span reads ASR. The active site involves arginine 207. Glutamate 236 is a catalytic residue. Histidine 253 acts as the Proton donor in catalysis. NAD(+) is bound at residue glycine 256. Position 257 (tyrosine 257) interacts with substrate.

It belongs to the D-isomer specific 2-hydroxyacid dehydrogenase family. PdxB subfamily. In terms of assembly, homodimer.

The protein resides in the cytoplasm. The enzyme catalyses 4-phospho-D-erythronate + NAD(+) = (R)-3-hydroxy-2-oxo-4-phosphooxybutanoate + NADH + H(+). It functions in the pathway cofactor biosynthesis; pyridoxine 5'-phosphate biosynthesis; pyridoxine 5'-phosphate from D-erythrose 4-phosphate: step 2/5. Its function is as follows. Catalyzes the oxidation of erythronate-4-phosphate to 3-hydroxy-2-oxo-4-phosphonooxybutanoate. This is Erythronate-4-phosphate dehydrogenase from Pseudomonas fluorescens (strain SBW25).